A 275-amino-acid polypeptide reads, in one-letter code: Small ribosomal subunit protein uS2 (275 aa).

The tract at residues 226–275 is disordered; it reads AAAPNSASVREEEFSAEAGDEGKGRRAPAKKATEKKADAPAAAPEAPAAE. Residues 264–275 show a composition bias toward low complexity; it reads APAAAPEAPAAE.

It belongs to the universal ribosomal protein uS2 family.

In Xanthomonas campestris pv. campestris (strain ATCC 33913 / DSM 3586 / NCPPB 528 / LMG 568 / P 25), this protein is Small ribosomal subunit protein uS2.